A 761-amino-acid polypeptide reads, in one-letter code: Wall-associated receptor kinase-like 4 (761 aa).

The signal sequence occupies residues 1–26 (MKKETQNLQCIPLVISVLSLFGVSSA). The Extracellular segment spans residues 27 to 349 (RKPPYLCNRV…EPKKPGQIKP (323 aa)). Residues asparagine 64, asparagine 166, asparagine 206, asparagine 226, and asparagine 262 are each glycosylated (N-linked (GlcNAc...) asparagine). The interval 278–339 (CVCSYGYFSG…CVNKPGWFTC (62 aa)) is atypical EGF-like. 3 cysteine pairs are disulfide-bonded: cysteine 280-cysteine 293, cysteine 316-cysteine 330, and cysteine 325-cysteine 339. Residues 350–370 (VFQGVLIGSALLLFAFGIFGL) form a helical membrane-spanning segment. The Cytoplasmic portion of the chain corresponds to 371-761 (YKFIKKQRRS…VEPLVPLRTW (391 aa)). The Protein kinase domain occupies 424–697 (FNTNRVLGQG…REVSVELERI (274 aa)). ATP is bound by residues 430 to 438 (LGQGGQGTV) and lysine 452. Phosphotyrosine is present on tyrosine 497. Aspartate 549 (proton acceptor) is an active-site residue. Phosphothreonine is present on residues threonine 583 and threonine 588. Tyrosine 596 is modified (phosphotyrosine). Residues 701–761 (SYKSEIHNDD…VEPLVPLRTW (61 aa)) form a disordered region. Acidic residues predominate over residues 708-732 (NDDDDDDDDDDEDDQAMELNIEETW).

This sequence belongs to the protein kinase superfamily. Ser/Thr protein kinase family. In terms of tissue distribution, expressed in the whole plant. Detected in root-shoot junctions and lateral root initiation sites.

It is found in the membrane. The enzyme catalyses L-seryl-[protein] + ATP = O-phospho-L-seryl-[protein] + ADP + H(+). The catalysed reaction is L-threonyl-[protein] + ATP = O-phospho-L-threonyl-[protein] + ADP + H(+). In terms of biological role, serine/threonine-protein kinase that may function as a signaling receptor of extracellular matrix component. Plays a role in plant mineral nutrients response. This chain is Wall-associated receptor kinase-like 4 (WAKL4), found in Arabidopsis thaliana (Mouse-ear cress).